Reading from the N-terminus, the 423-residue chain is CinA-like protein (423 aa).

It belongs to the CinA family.

This chain is CinA-like protein, found in Chlorobium phaeobacteroides (strain DSM 266 / SMG 266 / 2430).